Here is a 197-residue protein sequence, read N- to C-terminus: Translation machinery-associated protein 22 (197 aa).

The SUI1 domain occupies 102–173 (VQIKRVERNK…DVKEWLLEVY (72 aa)).

The protein belongs to the DENR family. Interacts with the 40S ribosomal subunit.

It is found in the cytoplasm. The chain is Translation machinery-associated protein 22 (tma22) from Aspergillus niger (strain ATCC MYA-4892 / CBS 513.88 / FGSC A1513).